The sequence spans 77 residues: Secapin (77 aa).

The signal sequence occupies residues 1–32; sequence MKNYSKNATYLITVLLFSFVAMLLIIPSKCEA. Positions 33–52 are excised as a propeptide; sequence VSNDMQPLEARTADLVQQPR. An intrachain disulfide couples Cys61 to Cys72.

The protein belongs to the secapin family. As to expression, expressed by the venom gland.

The protein resides in the secreted. Functionally, nontoxic peptide. This Apis cerana cerana (Oriental honeybee) protein is Secapin.